Consider the following 417-residue polypeptide: Valine--pyruvate aminotransferase (417 aa).

Lysine 249 bears the N6-(pyridoxal phosphate)lysine mark.

It belongs to the class-I pyridoxal-phosphate-dependent aminotransferase family. Homodimer. It depends on pyridoxal 5'-phosphate as a cofactor.

Its subcellular location is the cytoplasm. The catalysed reaction is L-valine + pyruvate = 3-methyl-2-oxobutanoate + L-alanine. In terms of biological role, involved in the biosynthesis of alanine. The chain is Valine--pyruvate aminotransferase (avtA) from Escherichia coli (strain K12).